Here is a 223-residue protein sequence, read N- to C-terminus: Deoxyribose-phosphate aldolase (223 aa).

Aspartate 92 serves as the catalytic Proton donor/acceptor. The active-site Schiff-base intermediate with acetaldehyde is lysine 154. Lysine 182 serves as the catalytic Proton donor/acceptor.

This sequence belongs to the DeoC/FbaB aldolase family. DeoC type 1 subfamily.

The protein localises to the cytoplasm. The catalysed reaction is 2-deoxy-D-ribose 5-phosphate = D-glyceraldehyde 3-phosphate + acetaldehyde. The protein operates within carbohydrate degradation; 2-deoxy-D-ribose 1-phosphate degradation; D-glyceraldehyde 3-phosphate and acetaldehyde from 2-deoxy-alpha-D-ribose 1-phosphate: step 2/2. Functionally, catalyzes a reversible aldol reaction between acetaldehyde and D-glyceraldehyde 3-phosphate to generate 2-deoxy-D-ribose 5-phosphate. The protein is Deoxyribose-phosphate aldolase of Haemophilus influenzae (strain PittEE).